An 871-amino-acid chain; its full sequence is uncharacterized protein (871 aa).

11 helical membrane-spanning segments follow: residues 11 to 31 (AFVS…GLFL), 92 to 112 (YLFT…PILL), 139 to 159 (FYAH…IIYR), 380 to 400 (TILT…GCIS), 422 to 442 (LLGI…MSLV), 475 to 495 (VQVF…VQVI), 520 to 540 (FLLQ…TLLL), 562 to 582 (LSAP…TIMI), 586 to 606 (IIAP…YFAY), 629 to 649 (LFQV…LFVL), and 653 to 673 (WGAT…HLYF). Residues Ser725, Ser726, Ser727, Ser729, Ser737, and Ser761 each carry the phosphoserine modification. Residues 727–740 (SGSDEFLETSSRTS) are compositionally biased toward polar residues. Residues 727–746 (SGSDEFLETSSRTSENTKEK) form a disordered region.

Belongs to the CSC1 (TC 1.A.17) family.

The protein localises to the golgi apparatus membrane. In terms of biological role, acts as an osmosensitive calcium-permeable cation channel. This is an uncharacterized protein from Schizosaccharomyces pombe (strain 972 / ATCC 24843) (Fission yeast).